A 625-amino-acid polypeptide reads, in one-letter code: Procollagen galactosyltransferase 2 (625 aa).

The N-terminal stretch at 1 to 26 (MAARLATVACALFLLSSALLRLGCRA) is a signal peptide. N-linked (GlcNAc...) asparagine glycans are attached at residues Asn96, Asn184, Asn381, and Asn579. The tract at residues 597 to 625 (QGHIRSTAKNTEALPPPTSLDTVPSRDEL) is disordered. The Prevents secretion from ER signature appears at 622–625 (RDEL).

It belongs to the glycosyltransferase 25 family.

It is found in the endoplasmic reticulum lumen. The enzyme catalyses (5R)-5-hydroxy-L-lysyl-[collagen] + UDP-alpha-D-galactose = (5R)-5-O-(beta-D-galactosyl)-5-hydroxy-L-lysyl-[collagen] + UDP + H(+). Beta-galactosyltransferase that transfers beta-galactose to hydroxylysine residues of collagen. The sequence is that of Procollagen galactosyltransferase 2 (Colgalt2) from Mus musculus (Mouse).